Here is a 258-residue protein sequence, read N- to C-terminus: Thiazole synthase (258 aa).

K100 functions as the Schiff-base intermediate with DXP in the catalytic mechanism. 1-deoxy-D-xylulose 5-phosphate-binding positions include G161, 187–188, and 209–210; these read AG and NS.

Belongs to the ThiG family. In terms of assembly, homotetramer. Forms heterodimers with either ThiH or ThiS.

Its subcellular location is the plastid. The protein localises to the chloroplast. The catalysed reaction is [ThiS sulfur-carrier protein]-C-terminal-Gly-aminoethanethioate + 2-iminoacetate + 1-deoxy-D-xylulose 5-phosphate = [ThiS sulfur-carrier protein]-C-terminal Gly-Gly + 2-[(2R,5Z)-2-carboxy-4-methylthiazol-5(2H)-ylidene]ethyl phosphate + 2 H2O + H(+). It participates in cofactor biosynthesis; thiamine diphosphate biosynthesis. Functionally, catalyzes the rearrangement of 1-deoxy-D-xylulose 5-phosphate (DXP) to produce the thiazole phosphate moiety of thiamine. Sulfur is provided by the thiocarboxylate moiety of the carrier protein ThiS. In vitro, sulfur can be provided by H(2)S. The sequence is that of Thiazole synthase from Cyanidioschyzon merolae (strain NIES-3377 / 10D) (Unicellular red alga).